We begin with the raw amino-acid sequence, 118 residues long: Large ribosomal subunit protein uL22 (118 aa).

It belongs to the universal ribosomal protein uL22 family. As to quaternary structure, part of the 50S ribosomal subunit.

This protein binds specifically to 23S rRNA; its binding is stimulated by other ribosomal proteins, e.g. L4, L17, and L20. It is important during the early stages of 50S assembly. It makes multiple contacts with different domains of the 23S rRNA in the assembled 50S subunit and ribosome. Its function is as follows. The globular domain of the protein is located near the polypeptide exit tunnel on the outside of the subunit, while an extended beta-hairpin is found that lines the wall of the exit tunnel in the center of the 70S ribosome. The protein is Large ribosomal subunit protein uL22 of Leuconostoc citreum (strain KM20).